Reading from the N-terminus, the 95-residue chain is Small ribosomal subunit protein uS17 (95 aa).

This sequence belongs to the universal ribosomal protein uS17 family. As to quaternary structure, part of the 30S ribosomal subunit.

One of the primary rRNA binding proteins, it binds specifically to the 5'-end of 16S ribosomal RNA. The polypeptide is Small ribosomal subunit protein uS17 (Mesomycoplasma hyopneumoniae (strain 7448) (Mycoplasma hyopneumoniae)).